Consider the following 465-residue polypeptide: Uronate isomerase (465 aa).

It belongs to the metallo-dependent hydrolases superfamily. Uronate isomerase family.

The enzyme catalyses D-glucuronate = D-fructuronate. It carries out the reaction aldehydo-D-galacturonate = keto-D-tagaturonate. The protein operates within carbohydrate metabolism; pentose and glucuronate interconversion. The chain is Uronate isomerase from Bacillus velezensis (strain DSM 23117 / BGSC 10A6 / LMG 26770 / FZB42) (Bacillus amyloliquefaciens subsp. plantarum).